A 950-amino-acid polypeptide reads, in one-letter code: RNA polymerase-associated protein RapA (950 aa).

The 169-residue stretch at 165-333 (EVADRMAPRV…FARLRLLDPN (169 aa)) folds into the Helicase ATP-binding domain. ATP is bound at residue 178-185 (DEVGLGKT). Positions 279-282 (DEAH) match the DEAH box motif. A Helicase C-terminal domain is found at 475 to 629 (RVEWLIDTLK…TCPTGNALQH (155 aa)).

It belongs to the SNF2/RAD54 helicase family. RapA subfamily. As to quaternary structure, interacts with the RNAP. Has a higher affinity for the core RNAP than for the holoenzyme. Its ATPase activity is stimulated by binding to RNAP.

Its function is as follows. Transcription regulator that activates transcription by stimulating RNA polymerase (RNAP) recycling in case of stress conditions such as supercoiled DNA or high salt concentrations. Probably acts by releasing the RNAP, when it is trapped or immobilized on tightly supercoiled DNA. Does not activate transcription on linear DNA. Probably not involved in DNA repair. The sequence is that of RNA polymerase-associated protein RapA from Pseudomonas aeruginosa (strain LESB58).